We begin with the raw amino-acid sequence, 220 residues long: dITP/XTP pyrophosphatase (220 aa).

Residue Ser13–Lys18 coordinates substrate. Positions 45 and 74 each coordinate Mg(2+). Asp74 (proton acceptor) is an active-site residue. Substrate is bound by residues Ser75, Phe163–Asp166, Lys186, and His199–Arg200.

It belongs to the HAM1 NTPase family. In terms of assembly, homodimer. The cofactor is Mg(2+).

It catalyses the reaction XTP + H2O = XMP + diphosphate + H(+). The enzyme catalyses dITP + H2O = dIMP + diphosphate + H(+). It carries out the reaction ITP + H2O = IMP + diphosphate + H(+). Pyrophosphatase that catalyzes the hydrolysis of nucleoside triphosphates to their monophosphate derivatives, with a high preference for the non-canonical purine nucleotides XTP (xanthosine triphosphate), dITP (deoxyinosine triphosphate) and ITP. Seems to function as a house-cleaning enzyme that removes non-canonical purine nucleotides from the nucleotide pool, thus preventing their incorporation into DNA/RNA and avoiding chromosomal lesions. This is dITP/XTP pyrophosphatase from Mesorhizobium japonicum (strain LMG 29417 / CECT 9101 / MAFF 303099) (Mesorhizobium loti (strain MAFF 303099)).